A 217-amino-acid polypeptide reads, in one-letter code: Somatotropin (217 aa).

The N-terminal stretch at 1–26 is a signal peptide; it reads MATGSHTTTLLLAVALLGLPWPQEAG. Histidine 46 provides a ligand contact to Zn(2+). The cysteines at positions 79 and 190 are disulfide-linked. A Zn(2+)-binding site is contributed by glutamate 199. An intrachain disulfide couples cysteine 207 to cysteine 215.

Belongs to the somatotropin/prolactin family.

Its subcellular location is the secreted. Functionally, plays an important role in growth control. Its major role in stimulating body growth is to stimulate the liver and other tissues to secrete IGF1. It stimulates both the differentiation and proliferation of myoblasts. It also stimulates amino acid uptake and protein synthesis in muscle and other tissues. This is Somatotropin (GH1) from Galago senegalensis (Northern lesser bushbaby).